A 478-amino-acid polypeptide reads, in one-letter code: Adenosylhomocysteinase (478 aa).

Positions 67, 144, and 204 each coordinate substrate. Residue 205–207 (TTT) coordinates NAD(+). Positions 234 and 238 each coordinate substrate. Residues asparagine 239, 268-273 (GYGDVG), glutamate 291, asparagine 326, 347-349 (IGH), and asparagine 392 contribute to the NAD(+) site.

It belongs to the adenosylhomocysteinase family. It depends on NAD(+) as a cofactor.

The protein localises to the cytoplasm. The enzyme catalyses S-adenosyl-L-homocysteine + H2O = L-homocysteine + adenosine. The protein operates within amino-acid biosynthesis; L-homocysteine biosynthesis; L-homocysteine from S-adenosyl-L-homocysteine: step 1/1. Its function is as follows. May play a key role in the regulation of the intracellular concentration of adenosylhomocysteine. The polypeptide is Adenosylhomocysteinase (Nitrosomonas europaea (strain ATCC 19718 / CIP 103999 / KCTC 2705 / NBRC 14298)).